The following is a 465-amino-acid chain: Argininosuccinate lyase (465 aa).

Belongs to the lyase 1 family. Argininosuccinate lyase subfamily.

It localises to the cytoplasm. It catalyses the reaction 2-(N(omega)-L-arginino)succinate = fumarate + L-arginine. The protein operates within amino-acid biosynthesis; L-arginine biosynthesis; L-arginine from L-ornithine and carbamoyl phosphate: step 3/3. The polypeptide is Argininosuccinate lyase (Clostridium botulinum (strain Alaska E43 / Type E3)).